The following is a 241-amino-acid chain: Chlorophyll a-b binding protein 6, chloroplastic (241 aa).

The transit peptide at 1-35 directs the protein to the chloroplast; sequence MASNSLMSCGIAAVYPSLLSSSKSKFVSAGVPLPN. A chlorophyll b-binding site is contributed by W48. Positions 68, 87, and 90 each coordinate chlorophyll a. R92 contributes to the chlorophyll b binding site. A helical membrane pass occupies residues 93-113; that stretch reads WAMLAVPGILVPEALGYGNWV. Residue L129 coordinates chlorophyll a. Residues 132 to 152 form a helical membrane-spanning segment; the sequence is PVPWGTLPTILAIEFLAIAFV. Positions 133, 153, and 156 each coordinate chlorophyll b. 6 residues coordinate chlorophyll a: K190, E191, N194, R196, Q208, and H224. A helical transmembrane segment spans residues 197–217; the sequence is LALLAFVGFCVQQSAYPGTGP.

This sequence belongs to the light-harvesting chlorophyll a/b-binding (LHC) protein family. In terms of assembly, the LHC complex consists of chlorophyll a-b binding proteins. Red-emitting heterodimer with LHCA4. Interacts with LHCA5. It depends on Binds at least 14 chlorophylls (8 Chl-a and 6 Chl-b) and carotenoids such as lutein and neoxanthin. as a cofactor. In terms of processing, photoregulated by reversible phosphorylation of its threonine residues.

Its subcellular location is the plastid. The protein resides in the chloroplast thylakoid membrane. The light-harvesting complex (LHC) functions as a light receptor, it captures and delivers excitation energy to photosystems with which it is closely associated. This is Chlorophyll a-b binding protein 6, chloroplastic from Arabidopsis thaliana (Mouse-ear cress).